The following is a 338-amino-acid chain: Ketol-acid reductoisomerase (NADP(+)) (338 aa).

Residues 1–181 (MKVYYDKDAD…GGTKGGVIET (181 aa)) enclose the KARI N-terminal Rossmann domain. NADP(+) is bound by residues 24 to 27 (YGSQ), R47, and S52. H107 is an active-site residue. NADP(+) is bound at residue G133. Residues 182–327 (NFREETETDL…GQLRDMMPWI (146 aa)) enclose the KARI C-terminal knotted domain. Mg(2+) contacts are provided by D190, E194, E226, and E230. Residue S251 coordinates substrate.

Belongs to the ketol-acid reductoisomerase family. Mg(2+) serves as cofactor.

The enzyme catalyses (2R)-2,3-dihydroxy-3-methylbutanoate + NADP(+) = (2S)-2-acetolactate + NADPH + H(+). It catalyses the reaction (2R,3R)-2,3-dihydroxy-3-methylpentanoate + NADP(+) = (S)-2-ethyl-2-hydroxy-3-oxobutanoate + NADPH + H(+). Its pathway is amino-acid biosynthesis; L-isoleucine biosynthesis; L-isoleucine from 2-oxobutanoate: step 2/4. It participates in amino-acid biosynthesis; L-valine biosynthesis; L-valine from pyruvate: step 2/4. In terms of biological role, involved in the biosynthesis of branched-chain amino acids (BCAA). Catalyzes an alkyl-migration followed by a ketol-acid reduction of (S)-2-acetolactate (S2AL) to yield (R)-2,3-dihydroxy-isovalerate. In the isomerase reaction, S2AL is rearranged via a Mg-dependent methyl migration to produce 3-hydroxy-3-methyl-2-ketobutyrate (HMKB). In the reductase reaction, this 2-ketoacid undergoes a metal-dependent reduction by NADPH to yield (R)-2,3-dihydroxy-isovalerate. This Aromatoleum aromaticum (strain DSM 19018 / LMG 30748 / EbN1) (Azoarcus sp. (strain EbN1)) protein is Ketol-acid reductoisomerase (NADP(+)).